We begin with the raw amino-acid sequence, 343 residues long: Biotin synthase (343 aa).

The Radical SAM core domain occupies 64–291; sequence NTVQLSTLLS…RAMVRLSAGR (228 aa). [4Fe-4S] cluster is bound by residues C79, C83, and C86. Positions 123, 154, 214, and 286 each coordinate [2Fe-2S] cluster.

The protein belongs to the radical SAM superfamily. Biotin synthase family. Homodimer. The cofactor is [4Fe-4S] cluster. Requires [2Fe-2S] cluster as cofactor.

It catalyses the reaction (4R,5S)-dethiobiotin + (sulfur carrier)-SH + 2 reduced [2Fe-2S]-[ferredoxin] + 2 S-adenosyl-L-methionine = (sulfur carrier)-H + biotin + 2 5'-deoxyadenosine + 2 L-methionine + 2 oxidized [2Fe-2S]-[ferredoxin]. It functions in the pathway cofactor biosynthesis; biotin biosynthesis; biotin from 7,8-diaminononanoate: step 2/2. Functionally, catalyzes the conversion of dethiobiotin (DTB) to biotin by the insertion of a sulfur atom into dethiobiotin via a radical-based mechanism. In Cupriavidus necator (strain ATCC 17699 / DSM 428 / KCTC 22496 / NCIMB 10442 / H16 / Stanier 337) (Ralstonia eutropha), this protein is Biotin synthase.